Reading from the N-terminus, the 3901-residue chain is Nonribosomal peptide synthetase opaA (3901 aa).

The adenylation 1 stretch occupies residues 248–641; the sequence is HNAQHHPSVV…HRKDNQIKIR (394 aa). The region spanning 780–854 is the Carrier 1 domain; the sequence is LPVTANEIVV…DMATRLTRIK (75 aa). Ser-815 is modified (O-(pantetheine 4'-phosphoryl)serine). Residues 891 to 1164 form a condensation 1 region; the sequence is DAYPCSALQE…IATVPIRINL (274 aa). The adenylation 2 stretch occupies residues 1328 to 1725; that stretch reads QSHAQKTPKS…GRIGNQVKLR (398 aa). The Carrier 2 domain maps to 1858-1936; the sequence is RTPLDTERDL…QIAAQAATRA (79 aa). Ser-1895 is subject to O-(pantetheine 4'-phosphoryl)serine. Positions 1953 to 2261 are epimerase; sequence KLTPIQQLFF…KDARRRLTRN (309 aa). A condensation 2 region spans residues 2403–2826; that stretch reads ENLYPCAPIQ…LVSTDHKRLL (424 aa). The tract at residues 2846–3243 is adenylation 3; the sequence is QQHVRETPDA…GRKDSQIKIR (398 aa). The Carrier 3 domain occupies 3375–3451; the sequence is LPSTAGEQLL…ALAARSRSKD (77 aa). At Ser-3412 the chain carries O-(pantetheine 4'-phosphoryl)serine. Residues 3509–3837 form a condensation 3 region; it reads HHFSFAVEGK…EDLKTHFTLN (329 aa).

This sequence belongs to the NRP synthetase family.

Functionally, nonribosomal peptide synthetase; part of the gene cluster that mediates the biosynthesis of oxepinamides, derivatives of anthranilyl-containing tripeptides that share an oxepin ring and a fused pyrimidinone moiety. The nonribosomal peptide synthetase (NRPS) opaA assembles the quinazolinone core with D-Phe incorporation. The first adenylation domain (A1) of opaA loads and activates anthranilic acid whereas the second A domain (A2) is for activating of L-Phe, which is then converted to D-form by the E domain. The third A domain (A3) is responsible for L-Ile activation and the terminal condensation domain C3 for cyclization and releasing the NRPS product protuboxepin K. The cytochrome P450 monooxygenase opaB then catalyzes alone the oxepin ring formation to convert protuboxepin K into protuboxepin A. The flavoenzyme opaC installs subsequently one hydroxyl group at the oxepin ring, accompanied by double bond migration, to form 15-epi-oxepinamide E. The epimerase opaE changes the D-Phe residue back to L-form, leading to oxepinamide E, which is further methylated at the hydroxyl group at C-12 by the O-methyltransferase OpaF to yield oxepinamide F. This chain is Nonribosomal peptide synthetase opaA, found in Aspergillus ustus.